We begin with the raw amino-acid sequence, 469 residues long: Glutamate--tRNA ligase (469 aa).

Positions 11–21 (PSPTGFIHLGN) match the 'HIGH' region motif. A compositionally biased stretch (basic and acidic residues) spans 118–131 (GEKPRYDGTWRPEP). Positions 118 to 139 (GEKPRYDGTWRPEPGKVLPEPP) are disordered. The 'KMSKS' region motif lies at 243–247 (KMSKR). An ATP-binding site is contributed by K246.

Belongs to the class-I aminoacyl-tRNA synthetase family. Glutamate--tRNA ligase type 1 subfamily. As to quaternary structure, monomer.

The protein resides in the cytoplasm. The enzyme catalyses tRNA(Glu) + L-glutamate + ATP = L-glutamyl-tRNA(Glu) + AMP + diphosphate. In terms of biological role, catalyzes the attachment of glutamate to tRNA(Glu) in a two-step reaction: glutamate is first activated by ATP to form Glu-AMP and then transferred to the acceptor end of tRNA(Glu). This chain is Glutamate--tRNA ligase, found in Burkholderia mallei (strain NCTC 10247).